Reading from the N-terminus, the 129-residue chain is Glycine cleavage system H protein (129 aa).

The Lipoyl-binding domain occupies 24-106; that stretch reads LVRVGISAFA…HGEGWLLVLR (83 aa). Lys-65 carries the N6-lipoyllysine modification.

It belongs to the GcvH family. In terms of assembly, the glycine cleavage system is composed of four proteins: P, T, L and H. Requires (R)-lipoate as cofactor.

The glycine cleavage system catalyzes the degradation of glycine. The H protein shuttles the methylamine group of glycine from the P protein to the T protein. The sequence is that of Glycine cleavage system H protein from Parasynechococcus marenigrum (strain WH8102).